The primary structure comprises 64 residues: uncharacterized protein (64 aa).

As to expression, widely expressed; not found in breast.

This is an uncharacterized protein from Homo sapiens (Human).